Here is a 57-residue protein sequence, read N- to C-terminus: Large ribosomal subunit protein bL32 (57 aa).

It belongs to the bacterial ribosomal protein bL32 family.

This Staphylococcus aureus (strain MSSA476) protein is Large ribosomal subunit protein bL32.